Consider the following 231-residue polypeptide: 7-cyano-7-deazaguanine synthase (231 aa).

8–18 (FSGGQDSTTCL) lines the ATP pocket. Zn(2+)-binding residues include C188, C197, C200, and C203.

The protein belongs to the QueC family. It depends on Zn(2+) as a cofactor.

It carries out the reaction 7-carboxy-7-deazaguanine + NH4(+) + ATP = 7-cyano-7-deazaguanine + ADP + phosphate + H2O + H(+). Its pathway is purine metabolism; 7-cyano-7-deazaguanine biosynthesis. Catalyzes the ATP-dependent conversion of 7-carboxy-7-deazaguanine (CDG) to 7-cyano-7-deazaguanine (preQ(0)). The protein is 7-cyano-7-deazaguanine synthase of Sodalis glossinidius (strain morsitans).